Consider the following 220-residue polypeptide: Vesicle-associated membrane protein 7 (220 aa).

Ala2 carries the post-translational modification N-acetylalanine. At 2–188 (AILFAVVARG…ARAMCMKNIK (187 aa)) the chain is on the cytoplasmic side. The region spanning 7-110 (VVARGTTILA…AMNSEFSSVL (104 aa)) is the Longin domain. The region spanning 125–185 (KVMETQAQVD…RNLARAMCMK (61 aa)) is the v-SNARE coiled-coil homology domain. A phosphoserine mark is found at Ser167 and Ser168. A helical; Anchor for type IV membrane protein membrane pass occupies residues 189–209 (LTIIIIIVSIVFIYIIVSLLC). Topologically, residues 210–220 (GGFTWPNCVKK) are vesicular.

This sequence belongs to the synaptobrevin family. As to quaternary structure, component of the SNARE complex composed of STX4, SNAP23 and VAMP7 that binds SYT7 during lysosomal exocytosis. Component of the SNARE complex composed of STX7, STX8, VAMP7 and VTI1B that is required for heterotypic fusion of late endosomes with lysosomes. May interact with STX17. Interacts with PICALM. Interacts with RAB21.

The protein resides in the cytoplasmic vesicle. It is found in the secretory vesicle membrane. Its subcellular location is the golgi apparatus. It localises to the trans-Golgi network membrane. The protein localises to the late endosome membrane. The protein resides in the lysosome membrane. It is found in the endoplasmic reticulum membrane. Its subcellular location is the phagosome membrane. It localises to the synapse. The protein localises to the synaptosome. Involved in the targeting and/or fusion of transport vesicles to their target membrane during transport of proteins from the early endosome to the lysosome. Required for heterotypic fusion of late endosomes with lysosomes and homotypic lysosomal fusion. Required for calcium regulated lysosomal exocytosis. Involved in the export of chylomicrons from the endoplasmic reticulum to the cis Golgi. Required for exocytosis of mediators during eosinophil and neutrophil degranulation, and target cell killing by natural killer cells. Required for focal exocytosis of late endocytic vesicles during phagosome formation. This chain is Vesicle-associated membrane protein 7 (Vamp7), found in Mus musculus (Mouse).